Reading from the N-terminus, the 354-residue chain is 5,10-methenyltetrahydromethanopterin hydrogenase (354 aa).

Belongs to the HMD family.

It catalyses the reaction 5,10-methenyl-5,6,7,8-tetrahydromethanopterin + H2 = 5,10-methylenetetrahydromethanopterin + H(+). The protein operates within one-carbon metabolism; methanogenesis from CO(2); 5,10-methylene-5,6,7,8-tetrahydromethanopterin from 5,10-methenyl-5,6,7,8-tetrahydromethanopterin (hydrogen route): step 1/1. Functionally, catalyzes the reversible reduction of methenyl-H(4)MPT(+) to methylene-H(4)MPT. In Methanococcus maripaludis (strain C5 / ATCC BAA-1333), this protein is 5,10-methenyltetrahydromethanopterin hydrogenase.